An 81-amino-acid chain; its full sequence is Photosystem I iron-sulfur center (81 aa).

4Fe-4S ferredoxin-type domains lie at 2–31 (SHSV…MIPW) and 39–68 (IAPA…VRVY). [4Fe-4S] cluster contacts are provided by Cys-11, Cys-14, Cys-17, Cys-21, Cys-48, Cys-51, Cys-54, and Cys-58.

As to quaternary structure, the eukaryotic PSI reaction center is composed of at least 11 subunits. Requires [4Fe-4S] cluster as cofactor.

It localises to the plastid. The protein localises to the chloroplast thylakoid membrane. The enzyme catalyses reduced [plastocyanin] + hnu + oxidized [2Fe-2S]-[ferredoxin] = oxidized [plastocyanin] + reduced [2Fe-2S]-[ferredoxin]. Apoprotein for the two 4Fe-4S centers FA and FB of photosystem I (PSI); essential for photochemical activity. FB is the terminal electron acceptor of PSI, donating electrons to ferredoxin. The C-terminus interacts with PsaA/B/D and helps assemble the protein into the PSI complex. Required for binding of PsaD and PsaE to PSI. PSI is a plastocyanin-ferredoxin oxidoreductase, converting photonic excitation into a charge separation, which transfers an electron from the donor P700 chlorophyll pair to the spectroscopically characterized acceptors A0, A1, FX, FA and FB in turn. The chain is Photosystem I iron-sulfur center from Liriodendron tulipifera (Tuliptree).